A 168-amino-acid polypeptide reads, in one-letter code: S-ribosylhomocysteine lyase (168 aa).

Residues histidine 54, histidine 58, and cysteine 128 each coordinate Fe cation.

The protein belongs to the LuxS family. As to quaternary structure, homodimer. It depends on Fe cation as a cofactor.

It carries out the reaction S-(5-deoxy-D-ribos-5-yl)-L-homocysteine = (S)-4,5-dihydroxypentane-2,3-dione + L-homocysteine. Involved in the synthesis of autoinducer 2 (AI-2) which is secreted by bacteria and is used to communicate both the cell density and the metabolic potential of the environment. The regulation of gene expression in response to changes in cell density is called quorum sensing. Catalyzes the transformation of S-ribosylhomocysteine (RHC) to homocysteine (HC) and 4,5-dihydroxy-2,3-pentadione (DPD). This chain is S-ribosylhomocysteine lyase, found in Actinobacillus succinogenes (strain ATCC 55618 / DSM 22257 / CCUG 43843 / 130Z).